The sequence spans 1173 residues: Clustered mitochondria protein homolog (1173 aa).

Low complexity predominate over residues 1–21; it reads MSTIDLPTSSLPGSSGDPSGT. Residues 1–25 form a disordered region; sequence MSTIDLPTSSLPGSSGDPSGTEMSH. The 250-residue stretch at 316–565 folds into the Clu domain; that stretch reads VPHRADLSRT…SLFPLDAQFL (250 aa). The segment at 888 to 910 is disordered; the sequence is KFTGKKGNKKKRNLGKSQNTTNR. Residues 890 to 901 are compositionally biased toward basic residues; that stretch reads TGKKGNKKKRNL. One copy of the TPR repeat lies at 984-1017; that stretch reads ARAYCQLAMIYHQLEKKEEAVELARKAVIVCERF.

It belongs to the CLU family. May associate with the eukaryotic translation initiation factor 3 (eIF-3) complex.

The protein resides in the cytoplasm. Functionally, mRNA-binding protein involved in proper cytoplasmic distribution of mitochondria. The chain is Clustered mitochondria protein homolog from Schizosaccharomyces pombe (strain 972 / ATCC 24843) (Fission yeast).